Here is a 486-residue protein sequence, read N- to C-terminus: UDP-N-acetylmuramoyl-L-alanyl-D-glutamate--2,6-diaminopimelate ligase (486 aa).

Ser-30 lines the UDP-N-acetyl-alpha-D-muramoyl-L-alanyl-D-glutamate pocket. 112-118 (GTNGKTT) lines the ATP pocket. Residues 154 to 155 (TT), Ser-181, Gln-187, and Arg-189 contribute to the UDP-N-acetyl-alpha-D-muramoyl-L-alanyl-D-glutamate site. Lys-221 is modified (N6-carboxylysine). Residues Arg-378, 402–405 (DNPR), Gly-455, and Glu-459 contribute to the meso-2,6-diaminopimelate site. Positions 402-405 (DNPR) match the Meso-diaminopimelate recognition motif motif.

This sequence belongs to the MurCDEF family. MurE subfamily. The cofactor is Mg(2+). Post-translationally, carboxylation is probably crucial for Mg(2+) binding and, consequently, for the gamma-phosphate positioning of ATP.

The protein localises to the cytoplasm. It carries out the reaction UDP-N-acetyl-alpha-D-muramoyl-L-alanyl-D-glutamate + meso-2,6-diaminopimelate + ATP = UDP-N-acetyl-alpha-D-muramoyl-L-alanyl-gamma-D-glutamyl-meso-2,6-diaminopimelate + ADP + phosphate + H(+). Its pathway is cell wall biogenesis; peptidoglycan biosynthesis. Catalyzes the addition of meso-diaminopimelic acid to the nucleotide precursor UDP-N-acetylmuramoyl-L-alanyl-D-glutamate (UMAG) in the biosynthesis of bacterial cell-wall peptidoglycan. The protein is UDP-N-acetylmuramoyl-L-alanyl-D-glutamate--2,6-diaminopimelate ligase of Cytophaga hutchinsonii (strain ATCC 33406 / DSM 1761 / CIP 103989 / NBRC 15051 / NCIMB 9469 / D465).